Consider the following 443-residue polypeptide: SAM50-like protein CG7639 (443 aa).

The 79-residue stretch at 23-101 (ARVDRVNVSG…QGYEVTFKGN (79 aa)) folds into the POTRA domain.

Belongs to the SAM50/omp85 family. In terms of assembly, associates with the mitochondrial contact site and cristae organizing system (MICOS) complex (also known as MINOS or MitOS complex).

The protein resides in the mitochondrion outer membrane. May play a role in the maintenance of the structure of mitochondrial cristae. The protein is SAM50-like protein CG7639 of Drosophila melanogaster (Fruit fly).